Here is a 159-residue protein sequence, read N- to C-terminus: Xanthine dehydrogenase iron-sulfur-binding subunit (159 aa).

The 76-residue stretch at 7–82 folds into the 2Fe-2S ferredoxin-type domain; that stretch reads ITIECTINGM…GKEIRTLEGE (76 aa). [2Fe-2S] cluster contacts are provided by C44, C49, and C52.

In terms of assembly, heterotrimer of XdhA, XdhB and XdhC. It depends on [2Fe-2S] cluster as a cofactor.

The protein operates within purine metabolism; hypoxanthine degradation; urate from hypoxanthine: step 1/2. In terms of biological role, iron-sulfur subunit of the xanthine dehydrogenase complex. In Escherichia coli O157:H7, this protein is Xanthine dehydrogenase iron-sulfur-binding subunit (xdhC).